Reading from the N-terminus, the 138-residue chain is Phosphoribosyl-AMP cyclohydrolase (138 aa).

Mg(2+) is bound at residue D84. C85 contacts Zn(2+). Mg(2+) is bound by residues D86 and D88. Zn(2+)-binding residues include C102 and C109.

This sequence belongs to the PRA-CH family. As to quaternary structure, homodimer. Mg(2+) is required as a cofactor. It depends on Zn(2+) as a cofactor.

The protein localises to the cytoplasm. The enzyme catalyses 1-(5-phospho-beta-D-ribosyl)-5'-AMP + H2O = 1-(5-phospho-beta-D-ribosyl)-5-[(5-phospho-beta-D-ribosylamino)methylideneamino]imidazole-4-carboxamide. It participates in amino-acid biosynthesis; L-histidine biosynthesis; L-histidine from 5-phospho-alpha-D-ribose 1-diphosphate: step 3/9. Catalyzes the hydrolysis of the adenine ring of phosphoribosyl-AMP. This Burkholderia orbicola (strain MC0-3) protein is Phosphoribosyl-AMP cyclohydrolase.